Here is a 219-residue protein sequence, read N- to C-terminus: Orotate phosphoribosyltransferase (219 aa).

A 5-phospho-alpha-D-ribose 1-diphosphate-binding site is contributed by lysine 26. Orotate is bound at residue 34-35 (FF). 5-phospho-alpha-D-ribose 1-diphosphate-binding positions include 72–73 (YK), arginine 98, lysine 99, lysine 102, histidine 104, and 124–132 (DDVITAGTA). Threonine 128 and arginine 156 together coordinate orotate.

Belongs to the purine/pyrimidine phosphoribosyltransferase family. PyrE subfamily. As to quaternary structure, homodimer. Mg(2+) serves as cofactor.

It carries out the reaction orotidine 5'-phosphate + diphosphate = orotate + 5-phospho-alpha-D-ribose 1-diphosphate. The protein operates within pyrimidine metabolism; UMP biosynthesis via de novo pathway; UMP from orotate: step 1/2. Its function is as follows. Catalyzes the transfer of a ribosyl phosphate group from 5-phosphoribose 1-diphosphate to orotate, leading to the formation of orotidine monophosphate (OMP). The protein is Orotate phosphoribosyltransferase of Stenotrophomonas maltophilia (strain R551-3).